The sequence spans 133 residues: Ribonuclease P protein component (133 aa).

The protein belongs to the RnpA family. Consists of a catalytic RNA component (M1 or rnpB) and a protein subunit.

The catalysed reaction is Endonucleolytic cleavage of RNA, removing 5'-extranucleotides from tRNA precursor.. Its function is as follows. RNaseP catalyzes the removal of the 5'-leader sequence from pre-tRNA to produce the mature 5'-terminus. It can also cleave other RNA substrates such as 4.5S RNA. The protein component plays an auxiliary but essential role in vivo by binding to the 5'-leader sequence and broadening the substrate specificity of the ribozyme. In Paramagnetospirillum magneticum (strain ATCC 700264 / AMB-1) (Magnetospirillum magneticum), this protein is Ribonuclease P protein component.